A 620-amino-acid chain; its full sequence is 1-deoxy-D-xylulose-5-phosphate synthase (620 aa).

Residues His-75 and Ala-116–Ser-118 each bind thiamine diphosphate. Asp-147 is a Mg(2+) binding site. Residues Gly-148 to Ala-149, Asn-177, Tyr-284, and Glu-366 contribute to the thiamine diphosphate site. Residue Asn-177 participates in Mg(2+) binding.

The protein belongs to the transketolase family. DXPS subfamily. Homodimer. Mg(2+) is required as a cofactor. The cofactor is thiamine diphosphate.

The enzyme catalyses D-glyceraldehyde 3-phosphate + pyruvate + H(+) = 1-deoxy-D-xylulose 5-phosphate + CO2. It participates in metabolic intermediate biosynthesis; 1-deoxy-D-xylulose 5-phosphate biosynthesis; 1-deoxy-D-xylulose 5-phosphate from D-glyceraldehyde 3-phosphate and pyruvate: step 1/1. Functionally, catalyzes the acyloin condensation reaction between C atoms 2 and 3 of pyruvate and glyceraldehyde 3-phosphate to yield 1-deoxy-D-xylulose-5-phosphate (DXP). The protein is 1-deoxy-D-xylulose-5-phosphate synthase of Bordetella avium (strain 197N).